Here is a 284-residue protein sequence, read N- to C-terminus: Diaminopimelate epimerase (284 aa).

3 residues coordinate substrate: Asn-21, Gln-54, and Asn-74. Cys-83 acts as the Proton donor in catalysis. Residues 84 to 85, Asn-167, Asn-200, and 218 to 219 each bind substrate; these read GN and ER. The Proton acceptor role is filled by Cys-227. Substrate is bound at residue 228–229; it reads GS.

This sequence belongs to the diaminopimelate epimerase family. As to quaternary structure, homodimer.

It is found in the cytoplasm. The catalysed reaction is (2S,6S)-2,6-diaminopimelate = meso-2,6-diaminopimelate. It functions in the pathway amino-acid biosynthesis; L-lysine biosynthesis via DAP pathway; DL-2,6-diaminopimelate from LL-2,6-diaminopimelate: step 1/1. Its function is as follows. Catalyzes the stereoinversion of LL-2,6-diaminopimelate (L,L-DAP) to meso-diaminopimelate (meso-DAP), a precursor of L-lysine and an essential component of the bacterial peptidoglycan. This Buchnera aphidicola subsp. Acyrthosiphon pisum (strain 5A) protein is Diaminopimelate epimerase.